The following is a 385-amino-acid chain: Cotranscriptional regulator ARB2A homolog (385 aa).

2 disordered regions span residues 1 to 65 and 220 to 239; these read MSDI…NGEE and EEQK…NGKL. Over residues 52–62 the composition is skewed to low complexity; sequence NNNNNNSNNSN. Residues 220 to 238 show a composition bias toward basic and acidic residues; that stretch reads EEQKEKAKEEEEKKDDNGK.

This sequence belongs to the ARB2A family.

The protein is Cotranscriptional regulator ARB2A homolog of Dictyostelium discoideum (Social amoeba).